The primary structure comprises 232 residues: Glutathione S-transferase U10 (232 aa).

Residues 6–85 (SKVILHGTWI…YIDETWTNSP (80 aa)) form the GST N-terminal domain. Glutathione is bound by residues 16-17 (ST), 42-43 (NK), 56-57 (KI), and 69-70 (ES). The GST C-terminal domain maps to 91–226 (DPYERAQVRF…FIQKYRQKCL (136 aa)).

It belongs to the GST superfamily. Tau family.

Its subcellular location is the cytoplasm. The protein resides in the cytosol. The enzyme catalyses RX + glutathione = an S-substituted glutathione + a halide anion + H(+). Functionally, may be involved in the conjugation of reduced glutathione to a wide number of exogenous and endogenous hydrophobic electrophiles and have a detoxification role against certain herbicides. This is Glutathione S-transferase U10 (GSTU10) from Arabidopsis thaliana (Mouse-ear cress).